We begin with the raw amino-acid sequence, 341 residues long: Elongation factor Ts (341 aa).

Residues 80-83 (TDFV) form an involved in Mg(2+) ion dislocation from EF-Tu region.

It belongs to the EF-Ts family.

It localises to the cytoplasm. Functionally, associates with the EF-Tu.GDP complex and induces the exchange of GDP to GTP. It remains bound to the aminoacyl-tRNA.EF-Tu.GTP complex up to the GTP hydrolysis stage on the ribosome. This chain is Elongation factor Ts, found in Lactobacillus gasseri (strain ATCC 33323 / DSM 20243 / BCRC 14619 / CIP 102991 / JCM 1131 / KCTC 3163 / NCIMB 11718 / NCTC 13722 / AM63).